The following is a 152-amino-acid chain: Deoxyuridine 5'-triphosphate nucleotidohydrolase (152 aa).

Substrate is bound by residues 71 to 73 (RSG), asparagine 84, and 88 to 90 (TVD).

Belongs to the dUTPase family. Mg(2+) is required as a cofactor.

It carries out the reaction dUTP + H2O = dUMP + diphosphate + H(+). It functions in the pathway pyrimidine metabolism; dUMP biosynthesis; dUMP from dCTP (dUTP route): step 2/2. Its function is as follows. This enzyme is involved in nucleotide metabolism: it produces dUMP, the immediate precursor of thymidine nucleotides and it decreases the intracellular concentration of dUTP so that uracil cannot be incorporated into DNA. The protein is Deoxyuridine 5'-triphosphate nucleotidohydrolase of Maricaulis maris (strain MCS10) (Caulobacter maris).